Here is a 2004-residue protein sequence, read N- to C-terminus: Alpha-2-macroglobulin homolog (2004 aa).

Positions 1–27 (MLCCLVFKGLLSMDLLRFLLISPFALI) are cleaved as a signal peptide.

The protein belongs to the protease inhibitor I39 (alpha-2-macroglobulin) family. Bacterial alpha-2-macroglobulin subfamily.

This Yersinia pestis protein is Alpha-2-macroglobulin homolog.